Reading from the N-terminus, the 434-residue chain is Ataxin-10 homolog (434 aa).

It belongs to the ataxin-10 family.

It localises to the cytoplasm. The protein localises to the nucleus. Its function is as follows. May play a role in the regulation of cytokinesis. The chain is Ataxin-10 homolog (mug160) from Schizosaccharomyces pombe (strain 972 / ATCC 24843) (Fission yeast).